We begin with the raw amino-acid sequence, 459 residues long: Asperlicin C monooxygenase (459 aa).

Residues Asp49, Ala62, and Arg121 each contribute to the FAD site. The active site involves Arg199. FAD contacts are provided by Asp323 and Ala336.

The protein belongs to the paxM FAD-dependent monooxygenase family. FAD serves as cofactor.

It catalyses the reaction asperlicin C + NADPH + O2 + H(+) = asperlicin E + NADP(+) + H2O. The catalysed reaction is asperlicin C + NADH + O2 + H(+) = asperlicin E + NAD(+) + H2O. Its function is as follows. Catalyzes the conversion of asperlicin A to form asperlicin E, a potent cholecystokinin receptor CCK(A) antagonist. The polypeptide is Asperlicin C monooxygenase (Petromyces alliaceus (Aspergillus alliaceus)).